Reading from the N-terminus, the 394-residue chain is GDNF family receptor alpha-like (394 aa).

Residues 1 to 18 (MIVFIFLAMGLSLENEYT) form the signal peptide. The Extracellular segment spans residues 19–351 (SQTNNCTYLR…TGFHSPFNGE (333 aa)). N23, N50, N62, N67, N103, and N116 each carry an N-linked (GlcNAc...) asparagine glycan. Intrachain disulfides connect C131/C189, C138/C144, C155/C167, C162/C210, C191/C198, C220/C291, C227/C233, C244/C275, C252/C258, C269/C316, and C293/C304. Residues 149–228 (ASYLKACSAN…TCLSVIRSCQ (80 aa)) are required for interaction with GDF15. Residues 352-371 (VIYAAMCMTVTCGILLLVMV) form a helical membrane-spanning segment. Residues 372 to 394 (KLRTSRISSKARDPSSIQIPGEL) are Cytoplasmic-facing.

This sequence belongs to the GDNFR family. In terms of assembly, interacts (via the extracellular domain) with GDF15 and RET; receptor of GDF15, mediates cellular signaling through interaction with RET after GDF15-binding. Interaction with RET requires previous GDF15-binding. In terms of processing, cleaved and inactivated by MMP14, inhibiting the GDF15-GFRAL aversive response. Expressed in the brainstem, restricted to cells in the area postrema and the immediately adjacent region of the nucleus tractus solitarius (at protein level). Detected at low levels in testis and adipose tissue.

It localises to the cell membrane. Specifically inhibited by 3P10 monoclonal antibody. Strongly activated by LY3463251, a long-acting and stable agonist composed of GDF15 conjugated monomeric human IgG4 Fc. In terms of biological role, brainstem-restricted receptor for GDF15 hormone, which triggers an aversive response, characterized by nausea, vomiting, and/or loss of appetite in response to various stresses. The aversive response is both required to reduce continuing exposure to those stresses at the time of exposure and to promote avoidance behavior in the future. The GDF15-GFRAL aversive response is triggered by stresses, such as anticancer drugs (camptothecin or cisplatin), cancers or drugs such as metformin. Upon interaction with its ligand, GDF15, mediates the GDF15-induced autophosphorylation and activation of the RET tyrosine kinase receptor, leading to activation of MAPK- and AKT- signaling pathways. Ligand-binding activates GFRAL-expressing neurons localized in the area postrema and nucleus tractus solitarius of the brainstem. The GDF15-GFRAL signal induces expression of genes involved in metabolism, such as lipid metabolism in adipose tissues. The polypeptide is GDNF family receptor alpha-like (Homo sapiens (Human)).